Reading from the N-terminus, the 416-residue chain is Lipoyl synthase, mitochondrial (416 aa).

Residues 1–33 constitute a mitochondrion transit peptide; that stretch reads MAAASTNRLRLLYTSTRASLPQSTPSILTTRTY. A disordered region spans residues 20 to 52; the sequence is LPQSTPSILTTRTYATTDSSTSATSTPKPRRRT. The span at 29 to 46 shows a compositional bias: low complexity; that stretch reads TTRTYATTDSSTSATSTP. Residues cysteine 133, cysteine 138, cysteine 144, cysteine 164, cysteine 168, cysteine 171, and serine 379 each coordinate [4Fe-4S] cluster. One can recognise a Radical SAM core domain in the interval 147 to 368; sequence GGDKAAATAT…QRRAEELGFL (222 aa).

It belongs to the radical SAM superfamily. Lipoyl synthase family. The cofactor is [4Fe-4S] cluster.

It is found in the mitochondrion. The catalysed reaction is [[Fe-S] cluster scaffold protein carrying a second [4Fe-4S](2+) cluster] + N(6)-octanoyl-L-lysyl-[protein] + 2 oxidized [2Fe-2S]-[ferredoxin] + 2 S-adenosyl-L-methionine + 4 H(+) = [[Fe-S] cluster scaffold protein] + N(6)-[(R)-dihydrolipoyl]-L-lysyl-[protein] + 4 Fe(3+) + 2 hydrogen sulfide + 2 5'-deoxyadenosine + 2 L-methionine + 2 reduced [2Fe-2S]-[ferredoxin]. It functions in the pathway protein modification; protein lipoylation via endogenous pathway; protein N(6)-(lipoyl)lysine from octanoyl-[acyl-carrier-protein]: step 2/2. Functionally, catalyzes the radical-mediated insertion of two sulfur atoms into the C-6 and C-8 positions of the octanoyl moiety bound to the lipoyl domains of lipoate-dependent enzymes, thereby converting the octanoylated domains into lipoylated derivatives. The polypeptide is Lipoyl synthase, mitochondrial (Aspergillus niger (strain ATCC MYA-4892 / CBS 513.88 / FGSC A1513)).